We begin with the raw amino-acid sequence, 141 residues long: MKMGMAKHSPRNKEYLCLTICGYRKEGMSEEAYRNHMVNVSAPMTKDLMVKYGIRRWTQIHNQNATRALMAELFDPQMCRLADFDCFSQVVFDNIEDYKRMKQDPWYKKHLMHDHEMFADTKRSMMTIGWIKEFVVDGKAV.

Positions 26–121 constitute an EthD domain; sequence EGMSEEAYRN…MHDHEMFADT (96 aa).

Belongs to the tpcK family.

It catalyses the reaction atrochrysone carboxylate + H(+) = atrochrysone + CO2. Functionally, decarboxylase; part of the ergochrome gene cluster responsible for the typical purple-black color of the ergot sclerotia. The ergochrome gene cluster produces several ergot pigments including the yellow ergochrome secalonic acid and its derivatives, as well as the red anthraquinones endocrocin and clavorubin. The pathway begins with the synthesis of atrochrysone thioester by the polyketide synthase (PKS) CPUR_05437. The atrochrysone carboxyl ACP thioesterase CPUR_05436 then breaks the thioester bond and releases the atrochrysone carboxylic acid from CPUR_05437. The decarboxylase CPUR_05434 then catalyzes the concerted decarboxylation-elimination required to convert atochrysone carboxylic acid into emodin anthrone, which is further oxidized to emodin by the anthrone oxygenase CPUR_05435. Emodin is further modified to yield monodictyphenone via several steps involving CPUR_05427, CPUR_05428, CPUR_05429 and CPUR_05430. The short chain dehydrogenase/reductase CPUR_05418 then catalyzes the C-5 ketoreduction to give the xanthone skeleton of the monomeric units. Ergochromes formation requires further dimerization steps of different xanthone units, probably catalyzed by the cytochrome P450 monooxygenase CPUR_05419. CPUR_05425, CPUR_05426 and CPUR_05431 are unique to Claviceps, thus it is likely that they are involved in further modification of xanthone units or in their dimerization. The yellow ergochromes and the red anthraquinone pigments endocrocin and clavorubin are products from the same PKS derived precursors and the latter are likely shunt products in the pathway of xanthone biosynthesis. It is proposed that atrochrysone carboxylic acid released from the PKS CPUR_05437 can also be converted to endocrocin anthrone which is further oxidized into endocrocin by CPUR_05435. Endocrocin could be then modified to clavorubin, possibly by CPUR_05423 and CPUR_05431. Clavorubin is the principal anthraquinone metabolite produced by the cluster with a much higher yield compared to endocrocin. The protein is Decarboxylase CPUR_05434 of Claviceps purpurea (strain 20.1) (Ergot fungus).